Here is a 33-residue protein sequence, read N- to C-terminus: GFLDSFKNAMIGVAKSVGKTALSTLACKIDKSC.

Residues Cys-27 and Cys-33 are joined by a disulfide bond.

In terms of tissue distribution, expressed by the skin glands.

It is found in the secreted. Has antibacterial activity against the Gram-positive bacterium S.aureus ATCC 25923 (MIC=36 uM) and the Gram-negative bacterium E.coli ATCC 25726 (MIC=18 uM). The chain is Brevinin-2PTe from Pulchrana picturata (Malaysian fire frog).